A 79-amino-acid chain; its full sequence is Protein SNA2 (79 aa).

The Cytoplasmic portion of the chain corresponds to M1–W6. Residues F7 to F27 traverse the membrane as a helical segment. At T28–L32 the chain is on the vesicular side. Residues I33 to I53 form a helical membrane-spanning segment. Over S54–A79 the chain is Cytoplasmic. Phosphoserine is present on residues S71 and S77.

This sequence belongs to the UPF0057 (PMP3) family.

The protein localises to the membrane. Its subcellular location is the lipid droplet. This Saccharomyces cerevisiae (strain ATCC 204508 / S288c) (Baker's yeast) protein is Protein SNA2 (SNA2).